A 393-amino-acid chain; its full sequence is MLVKSLQTCKICGAENTRGNHFGVQCCRACAVFFRRRAGTKYLRLKCLSVHCGEAARFCKPCRLKRCYEAGMKIEYFQHNRDSIKSSSIAQIPRSFANIVGRPSLVIFCVPQDSYQKTFVDLNSLVGKASEIFTAGPESPYIGLTQLKKLATFSNCSKEWAQTRFKTISHGEMSYFWEFYFLRTAKWLTYFDEFQRIPDEIKIKLLLSFWHVFARLDKLITTAKARKLKLCSQQTWAMSNGLILDFDRTKVDFSDISNYPTEDLFYFLNSITALDLQPQVLELMELEVSDMEFNFMLAQLTFSYAGKRFQGDILKICDRFQEVLSNDLHEYYVKEMRTPRYSGRLGKIMKINNAIQNDIWKNRPRGELAAIFNVFKVEFSHPEMFIDTGFVRN.

A DNA-binding region (nuclear receptor) is located at residues 6 to 79 (LQTCKICGAE…AGMKIEYFQH (74 aa)). An NR C4-type zinc finger spans residues 9-30 (CKICGAENTRGNHFGVQCCRAC). The NR C4-type; degenerate zinc finger occupies 47 to 62 (CLSVHCGEAARFCKPC). The NR LBD domain occupies 121–388 (DLNSLVGKAS…FSHPEMFIDT (268 aa)).

It belongs to the nuclear hormone receptor family.

It is found in the nucleus. In terms of biological role, orphan nuclear receptor. The polypeptide is Nuclear hormone receptor family member nhr-90 (nhr-90) (Caenorhabditis elegans).